Here is a 156-residue protein sequence, read N- to C-terminus: RNA polymerase sigma factor SigS (156 aa).

The short motif at 29–44 (EYYQLLLIKMWQLSQI) is the Polymerase core binding element. A DNA-binding region (H-T-H motif) is located at residues 126–145 (QFEIAEIMSLSLSTIKLIKM).

It belongs to the sigma-70 factor family.

Functionally, sigma factors are initiation factors that promote the attachment of RNA polymerase to specific initiation sites and are then released. Sigma-S contributes to the protection against external stress, thus playing a role in cellular fitness and survival. The chain is RNA polymerase sigma factor SigS (sigS) from Staphylococcus aureus (strain Mu50 / ATCC 700699).